Consider the following 318-residue polypeptide: 2-methyl-6-phytyl-1,4-hydroquinone methyltransferase (318 aa).

The N-terminal stretch at 1-39 is a signal peptide; that stretch reads MPEYLLLPAGLISLSLAIAAGLYLLTARGYQSSDSVANA. An SAM motif I region spans residues 97 to 106; that stretch reads VLDVGCGIGG. Positions 157–165 are SAM motif II; sequence GSFDVVWSV. The SAM motif III stretch occupies residues 184 to 193; that stretch reads VVKPGGILVV.

This sequence belongs to the class I-like SAM-binding methyltransferase superfamily. gTMT family.

It catalyses the reaction 2-methyl-6-phytyl-1,4-benzene-1,4-diol + S-adenosyl-L-methionine = 2,3-dimethyl-6-phytylbenzene-1,4-diol + S-adenosyl-L-homocysteine + H(+). The enzyme catalyses 2-methyl-6-(all-trans-nonaprenyl)benzene-1,4-diol + S-adenosyl-L-methionine = plastoquinol-9 + S-adenosyl-L-homocysteine + H(+). It carries out the reaction 6-geranylgeranyl-2-methylbenzene-1,4-diol + S-adenosyl-L-methionine = 6-geranylgeranyl-2,3-dimethylbenzene-1,4-diol + S-adenosyl-L-homocysteine + H(+). It participates in cofactor biosynthesis; tocopherol biosynthesis. Its function is as follows. Involved in a key methylation step in both tocopherol (vitamin E) and plastoquinone synthesis. Catalyzes the conversion of 2-methyl-6-phytyl-1,4-hydroquinol (MPBQ) to 2,3-dimethyl-6-phytyl-1,4-hydroquinol (DMPQ, a substrate for tocopherol cyclase), and 2-methyl-6-solanyl-1,4-benzoquinol (MSBQ) to plastoquinol. The protein is 2-methyl-6-phytyl-1,4-hydroquinone methyltransferase of Synechocystis sp. (strain ATCC 27184 / PCC 6803 / Kazusa).